The following is a 108-amino-acid chain: Tetrahydromethanopterin S-methyltransferase subunit B (108 aa).

The helical transmembrane segment at 79 to 99 (GMFFGFWVTMAILVLVTILAV) threads the bilayer.

Belongs to the MtrB family. The complex is composed of 8 subunits; MtrA, MtrB, MtrC, MtrD, MtrE, MtrF, MtrG and MtrH.

It localises to the cell membrane. It carries out the reaction 5-methyl-5,6,7,8-tetrahydromethanopterin + coenzyme M + 2 Na(+)(in) = 5,6,7,8-tetrahydromethanopterin + methyl-coenzyme M + 2 Na(+)(out). Its pathway is one-carbon metabolism; methanogenesis from CO(2); methyl-coenzyme M from 5,10-methylene-5,6,7,8-tetrahydromethanopterin: step 2/2. In terms of biological role, part of a complex that catalyzes the formation of methyl-coenzyme M and tetrahydromethanopterin from coenzyme M and methyl-tetrahydromethanopterin. This is an energy-conserving, sodium-ion translocating step. The polypeptide is Tetrahydromethanopterin S-methyltransferase subunit B (Methanococcus maripaludis (strain C5 / ATCC BAA-1333)).